We begin with the raw amino-acid sequence, 479 residues long: Cysteine--tRNA ligase (479 aa).

Position 29 (Cys-29) interacts with Zn(2+). A 'HIGH' region motif is present at residues 31-41 (ATVQGAPHIGH). The disordered stretch occupies residues 171–197 (QRVEDMQDAPDADPRGKRDPRDFALWK). Over residues 182–197 (ADPRGKRDPRDFALWK) the composition is skewed to basic and acidic residues. Zn(2+) is bound by residues Cys-224, His-249, and Glu-253. The 'KMSKS' region signature appears at 280–284 (KMSKS). Lys-283 lines the ATP pocket.

It belongs to the class-I aminoacyl-tRNA synthetase family. Monomer. Requires Zn(2+) as cofactor.

The protein localises to the cytoplasm. The catalysed reaction is tRNA(Cys) + L-cysteine + ATP = L-cysteinyl-tRNA(Cys) + AMP + diphosphate. The protein is Cysteine--tRNA ligase of Kocuria rhizophila (strain ATCC 9341 / DSM 348 / NBRC 103217 / DC2201).